The chain runs to 1214 residues: Neuronal cell adhesion molecule (1214 aa).

Positions 1 to 29 (MQLKTMPKKKPLSAGRAPLFLFLCQMISA) are cleaved as a signal peptide. Topologically, residues 30–1077 (LDVPLDPKLL…ASRQVDIATQ (1048 aa)) are extracellular. 2 consecutive Ig-like C2-type domains span residues 46-134 (PTIT…AAVS) and 141-235 (PSRS…QPIS). 2 disulfide bridges follow: Cys68-Cys123 and Cys167-Cys218. Asn83 carries an N-linked (GlcNAc...) asparagine glycan. Residues Asn223, Asn245, Asn251, Asn276, Asn314, and Asn377 are each glycosylated (N-linked (GlcNAc...) asparagine). 4 consecutive Ig-like C2-type domains span residues 267 to 356 (PPTF…ISVT), 361 to 448 (PYWI…AFVN), 454 to 541 (PRIL…VHLE), and 545 to 626 (PTRF…DSVS). A disulfide bond links Cys292 and Cys340. Cysteines 382 and 432 form a disulfide. N-linked (GlcNAc...) asparagine glycosylation is found at Asn433 and Asn507. Cystine bridges form between Cys476/Cys525 and Cys567/Cys616. N-linked (GlcNAc...) asparagine glycosylation is found at Asn619, Asn716, Asn802, Asn858, Asn993, Asn1009, and Asn1019. Fibronectin type-III domains are found at residues 649–744 (PPFD…TKAA), 746–843 (PDQN…SGED), 848–950 (APGN…TPEG), and 954–1051 (APSS…VDEG). Residues 1078-1100 (GWFIGLMCAVALLILILLIVCFI) traverse the membrane as a helical segment. Residues 1101-1214 (RRNKGGKYPV…SPVNAMNSFV (114 aa)) lie on the Cytoplasmic side of the membrane. Basic and acidic residues predominate over residues 1109-1129 (PVKEKEDAHADPEIQPMKEDD). The segment at 1109 to 1214 (PVKEKEDAHA…SPVNAMNSFV (106 aa)) is disordered. Thr1131 bears the Phosphothreonine mark. Phosphotyrosine is present on Tyr1135. Phosphoserine is present on Ser1136. Basic and acidic residues predominate over residues 1151-1160 (PSDRTVKKED). 6 positions are modified to phosphoserine: Ser1161, Ser1164, Ser1181, Ser1200, Ser1201, and Ser1205. A compositionally biased stretch (polar residues) spans 1198-1214 (NESSEAPSPVNAMNSFV).

Belongs to the immunoglobulin superfamily. L1/neurofascin/NgCAM family. As to quaternary structure, constituent of a NFASC/NRCAM/ankyrin-G complex. Detected in a complex with CNTN1 and PTPRB. Interacts with MYOC. Interacts with GLDN. As to expression, detected in cerebellum Purkinje cells. Detected on nodes of Ranvier and unmyelinated axons in sciatic nerve (at protein level).

The protein resides in the cell membrane. It is found in the cell projection. It localises to the axon. Its subcellular location is the secreted. Functionally, cell adhesion protein that is required for normal responses to cell-cell contacts in brain and in the peripheral nervous system. Plays a role in neurite outgrowth in response to contactin binding. Plays a role in mediating cell-cell contacts between Schwann cells and axons. Plays a role in the formation and maintenance of the nodes of Ranvier on myelinated axons. Nodes of Ranvier contain clustered sodium channels that are crucial for the saltatory propagation of action potentials along myelinated axons. During development, nodes of Ranvier are formed by the fusion of two heminodes. Required for normal clustering of sodium channels at heminodes; not required for the formation of mature nodes with normal sodium channel clusters. Required, together with GLDN, for maintaining NFASC and sodium channel clusters at mature nodes of Ranvier. The protein is Neuronal cell adhesion molecule (Nrcam) of Rattus norvegicus (Rat).